Here is a 101-residue protein sequence, read N- to C-terminus: ATP-dependent Clp protease adapter protein ClpS 2 (101 aa).

This sequence belongs to the ClpS family. Binds to the N-terminal domain of the chaperone ClpA.

Involved in the modulation of the specificity of the ClpAP-mediated ATP-dependent protein degradation. This Rhizobium meliloti (strain 1021) (Ensifer meliloti) protein is ATP-dependent Clp protease adapter protein ClpS 2.